The sequence spans 65 residues: MMHVCSLLVSFDVVKSLTQSVKHLSTRLEYKRMKSFICFCSTTFWNSCCSLEFNASIFTVLSYCS.

The N-terminal stretch at methionine 1 to serine 16 is a signal peptide.

This is an uncharacterized protein from Saccharomyces cerevisiae (strain ATCC 204508 / S288c) (Baker's yeast).